Reading from the N-terminus, the 224-residue chain is Voltage-dependent calcium channel gamma-1 subunit (224 aa).

Over 1–10 (MSQTKALKVR) the chain is Cytoplasmic. The helical transmembrane segment at 11–29 (VTLFCILVGIVLALVAVVT) threads the bilayer. Over 30 to 110 (DHWAVLSPHV…TQKEYSISAA (81 aa)) the chain is Extracellular. Residues Asn43 and Asn81 are each glycosylated (N-linked (GlcNAc...) asparagine). A disulfide bridge links Cys57 with Cys82. A helical membrane pass occupies residues 111–131 (AIAIFSLGFIILGTICGLLSF). The Cytoplasmic segment spans residues 132–136 (RKKRD). Residues 137 to 157 (YLLRPASMFYAFAGLCIFVSV) traverse the membrane as a helical segment. The Extracellular portion of the chain corresponds to 158–181 (EVMRQSVKRMIDSEDTVWIDYYYG). Residues 182 to 206 (WSFACACAAFILLFLGGIALLLFSL) form a helical membrane-spanning segment. At 207 to 224 (PRMPQYPWESCMDAEPEH) the chain is on the cytoplasmic side.

It belongs to the PMP-22/EMP/MP20 family. CACNG subfamily. As to quaternary structure, component of a calcium channel complex consisting of a pore-forming alpha subunit (CACNA1S) and the ancillary subunits CACNB1 or CACNB2, CACNG1 and CACNA2D1. The channel complex contains alpha, beta, gamma and delta subunits in a 1:1:1:1 ratio, i.e. it contains either CACNB1 or CACNB2. N-glycosylated.

It localises to the cell membrane. The protein localises to the sarcolemma. Functionally, regulatory subunit of the voltage-gated calcium channel that gives rise to L-type calcium currents in skeletal muscle. Regulates channel inactivation kinetics. The sequence is that of Voltage-dependent calcium channel gamma-1 subunit (CACNG1) from Sus scrofa (Pig).